The chain runs to 210 residues: Superoxide dismutase [Mn], mitochondrial (210 aa).

Mn(2+) contacts are provided by His-29, His-77, Asp-164, and His-168.

The protein belongs to the iron/manganese superoxide dismutase family. As to quaternary structure, homotetramer. Mn(2+) is required as a cofactor.

The protein resides in the mitochondrion matrix. The enzyme catalyses 2 superoxide + 2 H(+) = H2O2 + O2. Functionally, destroys superoxide anion radicals which are normally produced within the cells and which are toxic to biological systems. The protein is Superoxide dismutase [Mn], mitochondrial (sodB) of Aspergillus oryzae (strain ATCC 42149 / RIB 40) (Yellow koji mold).